We begin with the raw amino-acid sequence, 32 residues long: ATYKVRLLSEAEGIDVTIDCADDVYILDAAEE.

The 2Fe-2S ferredoxin-type domain occupies 3–32 (YKVRLLSEAEGIDVTIDCADDVYILDAAEE).

The protein belongs to the 2Fe2S plant-type ferredoxin family. [2Fe-2S] cluster serves as cofactor.

The protein resides in the plastid. It localises to the chloroplast. Its function is as follows. Ferredoxins are iron-sulfur proteins that transfer electrons in a wide variety of metabolic reactions. The sequence is that of Ferredoxin from Porphyridium purpureum (Red alga).